Here is a 176-residue protein sequence, read N- to C-terminus: Translation initiation factor IF-3 (176 aa).

It belongs to the IF-3 family. In terms of assembly, monomer.

It localises to the cytoplasm. In terms of biological role, IF-3 binds to the 30S ribosomal subunit and shifts the equilibrium between 70S ribosomes and their 50S and 30S subunits in favor of the free subunits, thus enhancing the availability of 30S subunits on which protein synthesis initiation begins. This Microcystis aeruginosa (strain NIES-843 / IAM M-2473) protein is Translation initiation factor IF-3.